We begin with the raw amino-acid sequence, 252 residues long: Hydroxyacylglutathione hydrolase (252 aa).

Zn(2+) is bound by residues His54, His56, Asp58, His59, His111, Asp130, and His170.

Belongs to the metallo-beta-lactamase superfamily. Glyoxalase II family. Monomer. It depends on Zn(2+) as a cofactor.

The enzyme catalyses an S-(2-hydroxyacyl)glutathione + H2O = a 2-hydroxy carboxylate + glutathione + H(+). It participates in secondary metabolite metabolism; methylglyoxal degradation; (R)-lactate from methylglyoxal: step 2/2. Thiolesterase that catalyzes the hydrolysis of S-D-lactoyl-glutathione to form glutathione and D-lactic acid. In Francisella philomiragia subsp. philomiragia (strain ATCC 25017 / CCUG 19701 / FSC 153 / O#319-036), this protein is Hydroxyacylglutathione hydrolase.